The following is a 470-amino-acid chain: Protein C-ets-2 (470 aa).

Positions 85–170 (ATFSGFKKEQ…EHLEQMIKEN (86 aa)) constitute a PNT domain. Ser-225 is subject to Phosphoserine. Positions 270-291 (ASGKPRDHDSAETGGDSFESSE) are disordered. Ser-296, Ser-299, and Ser-302 each carry phosphoserine. The segment at residues 364–444 (IQLWQFLLEL…SGKRYVYRFV (81 aa)) is a DNA-binding region (ETS).

It belongs to the ETS family. In terms of processing, phosphorylation by CDK10 at Ser-225 may create a phosphodegron that targets ETS2 for proteasomal degradation.

It is found in the nucleus. Functionally, transcription factor activating transcription. Binds specifically the GGA DNA motif in gene promoters and stimulates transcription of those genes. The chain is Protein C-ets-2 (ETS2) from Bos taurus (Bovine).